The sequence spans 58 residues: Small ribosomal subunit protein bS21 (58 aa).

The segment at 35–58 (REHYESPSVRRKKKSEAARKRRYK) is disordered. The span at 43 to 58 (VRRKKKSEAARKRRYK) shows a compositional bias: basic residues.

It belongs to the bacterial ribosomal protein bS21 family.

In Acetivibrio thermocellus (strain ATCC 27405 / DSM 1237 / JCM 9322 / NBRC 103400 / NCIMB 10682 / NRRL B-4536 / VPI 7372) (Clostridium thermocellum), this protein is Small ribosomal subunit protein bS21.